A 155-amino-acid chain; its full sequence is Interleukin-2 (155 aa).

Residues 1-20 (MYSMQLASCVALTLVLLVNS) form the signal peptide. The O-linked (GalNAc...) threonine glycan is linked to Thr-23. An intrachain disulfide couples Cys-78 to Cys-126.

The protein belongs to the IL-2 family.

The protein resides in the secreted. Functionally, cytokine produced by activated CD4-positive helper T-cells and to a lesser extend activated CD8-positive T-cells and natural killer (NK) cells that plays pivotal roles in the immune response and tolerance. Binds to a receptor complex composed of either the high-affinity trimeric IL-2R (IL2RA/CD25, IL2RB/CD122 and IL2RG/CD132) or the low-affinity dimeric IL-2R (IL2RB and IL2RG). Interaction with the receptor leads to oligomerization and conformation changes in the IL-2R subunits resulting in downstream signaling starting with phosphorylation of JAK1 and JAK3. In turn, JAK1 and JAK3 phosphorylate the receptor to form a docking site leading to the phosphorylation of several substrates including STAT5. This process leads to activation of several pathways including STAT, phosphoinositide-3-kinase/PI3K and mitogen-activated protein kinase/MAPK pathways. Functions as a T-cell growth factor and can increase NK-cell cytolytic activity as well. Promotes strong proliferation of activated B-cells and subsequently immunoglobulin production. Plays a pivotal role in regulating the adaptive immune system by controlling the survival and proliferation of regulatory T-cells, which are required for the maintenance of immune tolerance. Moreover, participates in the differentiation and homeostasis of effector T-cell subsets, including Th1, Th2, Th17 as well as memory CD8-positive T-cells. The protein is Interleukin-2 (Il2) of Rattus norvegicus (Rat).